A 28-amino-acid chain; its full sequence is Humanin-like 4 (28 aa).

The protein belongs to the humanin family. As to expression, highly expressed in testis. Also expressed in kidney, heart, skeletal muscles and brain.

It localises to the secreted. The protein resides in the cytoplasm. In terms of biological role, plays a role as a neuroprotective and antiapoptotic factor. The protein is Humanin-like 4 of Homo sapiens (Human).